We begin with the raw amino-acid sequence, 474 residues long: MANAVGKITQVIGAVVDVQFNDHLPEILNALETENDGKRLVLEVAQHLGEGTVRTIAMDSSEGLVRGQEVTDTDGPITVPVGPGTLGRILNVVGEPVDEGGPVDAEERRGIHQDAPEFADQSTEAEVLVTGIKVVDLLAPYSKGGKIGLFGGAGVGKTVLIMELINNIAKVHSGVSVFAGVGERTREGNDLYHEMIESGVIVPDNLPESKIALVYGQMNEPPGARMRIALSGLTLAEQFRDATGADVLFFIDNIFRFTQAGSEVSALLGRIPSAVGYQPTLATDMGTMQERITSTKRGSITSIQAVYVPADDLTDPAPATTFAHLDATTVLSRAISELGIYPAVDPLDSSSRLMDPTIVGDEHYQVARDVQGILQRYKSLQDIIAILGMDELSEEDKLTVARARKIQRFLSQPFDVAKVFTGSDGIQVQLEDTISSFKAVVAGEYDHLPEGAFYMVGGIDEVIAKAEKMAADAA.

Residue 151–158 (GGAGVGKT) participates in ATP binding.

It belongs to the ATPase alpha/beta chains family. As to quaternary structure, F-type ATPases have 2 components, CF(1) - the catalytic core - and CF(0) - the membrane proton channel. CF(1) has five subunits: alpha(3), beta(3), gamma(1), delta(1), epsilon(1). CF(0) has four main subunits: a(1), b(1), b'(1) and c(9-12).

It is found in the cell inner membrane. The catalysed reaction is ATP + H2O + 4 H(+)(in) = ADP + phosphate + 5 H(+)(out). In terms of biological role, produces ATP from ADP in the presence of a proton gradient across the membrane. The catalytic sites are hosted primarily by the beta subunits. This is ATP synthase subunit beta from Jannaschia sp. (strain CCS1).